Reading from the N-terminus, the 94-residue chain is Small ribosomal subunit protein bS6 (94 aa).

This sequence belongs to the bacterial ribosomal protein bS6 family.

Functionally, binds together with bS18 to 16S ribosomal RNA. The chain is Small ribosomal subunit protein bS6 from Clostridium botulinum (strain Hall / ATCC 3502 / NCTC 13319 / Type A).